The following is a 310-amino-acid chain: Proline iminopeptidase (310 aa).

In terms of domain architecture, AB hydrolase-1 spans 41–288; it reads LVTLHGGPGG…NSSHMAMWEE (248 aa). The active-site Nucleophile is serine 116. Residue aspartate 255 is part of the active site. Histidine 282 functions as the Proton donor in the catalytic mechanism.

The protein belongs to the peptidase S33 family. In terms of assembly, part of the tricorn proteolytic complex.

It carries out the reaction Release of N-terminal proline from a peptide.. Cleaves H-Pro-AMC as well as a wide spectrum of amino acid substrates and several peptide substrates without a proline at the N-terminus. In conjunction with the three factors F1, F2 and F3, Tricorn degrades oligopeptides in a sequential manner, yielding free amino acids. The protein is Proline iminopeptidase (pip) of Saccharolobus solfataricus (strain ATCC 35092 / DSM 1617 / JCM 11322 / P2) (Sulfolobus solfataricus).